The primary structure comprises 253 residues: Tetraspanin-11 (253 aa).

The next 4 membrane-spanning stretches (helical) occupy residues 19-39 (LLFI…AVGI), 63-83 (VLIF…GAII), 93-113 (YFCL…LAHV), and 220-240 (LLLM…GMVL).

It belongs to the tetraspanin (TM4SF) family.

The protein resides in the membrane. This is Tetraspanin-11 (Tspan11) from Rattus norvegicus (Rat).